The following is a 159-amino-acid chain: Nucleotide-binding protein PSPTO_4393 (159 aa).

This sequence belongs to the YajQ family.

Nucleotide-binding protein. This Pseudomonas syringae pv. tomato (strain ATCC BAA-871 / DC3000) protein is Nucleotide-binding protein PSPTO_4393.